The chain runs to 209 residues: dITP/XTP pyrophosphatase (209 aa).

Residue 7–12 participates in substrate binding; that stretch reads SSHGYK. Catalysis depends on Asp70, which acts as the Proton acceptor. Asp70 contacts Mg(2+). Substrate contacts are provided by residues Ser71, 154 to 157, Lys177, and 182 to 183; these read FGYD and HR.

It belongs to the HAM1 NTPase family. Homodimer. Mg(2+) is required as a cofactor.

The enzyme catalyses XTP + H2O = XMP + diphosphate + H(+). It catalyses the reaction dITP + H2O = dIMP + diphosphate + H(+). It carries out the reaction ITP + H2O = IMP + diphosphate + H(+). Pyrophosphatase that catalyzes the hydrolysis of nucleoside triphosphates to their monophosphate derivatives, with a high preference for the non-canonical purine nucleotides XTP (xanthosine triphosphate), dITP (deoxyinosine triphosphate) and ITP. Seems to function as a house-cleaning enzyme that removes non-canonical purine nucleotides from the nucleotide pool, thus preventing their incorporation into DNA/RNA and avoiding chromosomal lesions. This Chlamydia trachomatis serovar A (strain ATCC VR-571B / DSM 19440 / HAR-13) protein is dITP/XTP pyrophosphatase.